The chain runs to 1342 residues: DNA-directed RNA polymerase subunit beta (1342 aa).

This sequence belongs to the RNA polymerase beta chain family. In terms of assembly, the RNAP catalytic core consists of 2 alpha, 1 beta, 1 beta' and 1 omega subunit. When a sigma factor is associated with the core the holoenzyme is formed, which can initiate transcription.

It carries out the reaction RNA(n) + a ribonucleoside 5'-triphosphate = RNA(n+1) + diphosphate. In terms of biological role, DNA-dependent RNA polymerase catalyzes the transcription of DNA into RNA using the four ribonucleoside triphosphates as substrates. The chain is DNA-directed RNA polymerase subunit beta from Wigglesworthia glossinidia brevipalpis.